The following is a 140-amino-acid chain: Phosphopantetheine adenylyltransferase (140 aa).

Serine 9 provides a ligand contact to substrate. Residues 9–10 (SF) and histidine 17 each bind ATP. Positions 41, 74, and 88 each coordinate substrate. ATP is bound by residues 89-91 (GLR), glutamate 99, and 124-130 (KRSLSST).

The protein belongs to the bacterial CoaD family. Homohexamer. It depends on Mg(2+) as a cofactor.

It localises to the cytoplasm. It catalyses the reaction (R)-4'-phosphopantetheine + ATP + H(+) = 3'-dephospho-CoA + diphosphate. Its pathway is cofactor biosynthesis; coenzyme A biosynthesis; CoA from (R)-pantothenate: step 4/5. Its function is as follows. Reversibly transfers an adenylyl group from ATP to 4'-phosphopantetheine, yielding dephospho-CoA (dPCoA) and pyrophosphate. The polypeptide is Phosphopantetheine adenylyltransferase (Mycoplasma mycoides subsp. mycoides SC (strain CCUG 32753 / NCTC 10114 / PG1)).